A 118-amino-acid chain; its full sequence is Integration host factor subunit alpha (118 aa).

Residues 97 to 118 (NGAMPMSTEESDENTAQSASGG) are disordered.

The protein belongs to the bacterial histone-like protein family. In terms of assembly, heterodimer of an alpha and a beta chain.

Its function is as follows. This protein is one of the two subunits of integration host factor, a specific DNA-binding protein that functions in genetic recombination as well as in transcriptional and translational control. The polypeptide is Integration host factor subunit alpha (Rhodopseudomonas palustris (strain ATCC BAA-98 / CGA009)).